The sequence spans 512 residues: Histidine ammonia-lyase (512 aa).

The 5-imidazolinone (Ala-Gly) cross-link spans Ala-142–Gly-144. At Ser-143 the chain carries 2,3-didehydroalanine (Ser).

It belongs to the PAL/histidase family. Post-translationally, contains an active site 4-methylidene-imidazol-5-one (MIO), which is formed autocatalytically by cyclization and dehydration of residues Ala-Ser-Gly.

It localises to the cytoplasm. It carries out the reaction L-histidine = trans-urocanate + NH4(+). Its pathway is amino-acid degradation; L-histidine degradation into L-glutamate; N-formimidoyl-L-glutamate from L-histidine: step 1/3. This chain is Histidine ammonia-lyase, found in Bartonella quintana (strain Toulouse) (Rochalimaea quintana).